We begin with the raw amino-acid sequence, 450 residues long: Ribosomal protein uS12 methylthiotransferase RimO (450 aa).

An MTTase N-terminal domain is found at 9-124 (NRINVVTLGC…LLSALEADYK (116 aa)). [4Fe-4S] cluster contacts are provided by cysteine 18, cysteine 53, cysteine 87, cysteine 148, cysteine 152, and cysteine 155. In terms of domain architecture, Radical SAM core spans 134 to 365 (TTPKNYAYLK…EIQSQISWEL (232 aa)). The TRAM domain occupies 367-434 (QQKIGEVFNV…DFDLYGEPLN (68 aa)).

The protein belongs to the methylthiotransferase family. RimO subfamily. It depends on [4Fe-4S] cluster as a cofactor.

It localises to the cytoplasm. It catalyses the reaction L-aspartate(89)-[ribosomal protein uS12]-hydrogen + (sulfur carrier)-SH + AH2 + 2 S-adenosyl-L-methionine = 3-methylsulfanyl-L-aspartate(89)-[ribosomal protein uS12]-hydrogen + (sulfur carrier)-H + 5'-deoxyadenosine + L-methionine + A + S-adenosyl-L-homocysteine + 2 H(+). In terms of biological role, catalyzes the methylthiolation of an aspartic acid residue of ribosomal protein uS12. In Christiangramia forsetii (strain DSM 17595 / CGMCC 1.15422 / KT0803) (Gramella forsetii), this protein is Ribosomal protein uS12 methylthiotransferase RimO.